The following is a 519-amino-acid chain: UvrABC system protein C (519 aa).

In terms of domain architecture, GIY-YIG spans histidine 9–isoleucine 87. The 36-residue stretch at arginine 191 to leucine 226 folds into the UVR domain.

Belongs to the UvrC family. In terms of assembly, interacts with UvrB in an incision complex.

The protein resides in the cytoplasm. Functionally, the UvrABC repair system catalyzes the recognition and processing of DNA lesions. UvrC both incises the 5' and 3' sides of the lesion. The N-terminal half is responsible for the 3' incision and the C-terminal half is responsible for the 5' incision. In Methanosarcina barkeri (strain Fusaro / DSM 804), this protein is UvrABC system protein C.